A 310-amino-acid chain; its full sequence is Olfactory receptor 2A1/2A42 (310 aa).

Over 1 to 24 (MGENQTMVTEFLLLGFLLGPRIQM) the chain is Extracellular. N-linked (GlcNAc...) asparagine glycosylation occurs at N4. Residues 25 to 48 (LLFGLFSLFYIFTLLGNGAILGLI) form a helical membrane-spanning segment. Residues 49–56 (SLDSRLHT) are Cytoplasmic-facing. The chain crosses the membrane as a helical span at residues 57-78 (PMYFFLSHLAVVDIAYTRNTVP). Topologically, residues 79 to 99 (QMLANLLHPAKPISFAGCMTQ) are extracellular. Cysteines 96 and 188 form a disulfide. A helical membrane pass occupies residues 100-119 (TFLCLSFGHSECLLLVLMSY). The Cytoplasmic portion of the chain corresponds to 120-138 (DRYVAICHPLRYSVIMTWR). The chain crosses the membrane as a helical span at residues 139–157 (VCITLAVTSWTCGSLLALA). Residues 158–195 (HVVLILRLPFSGPHEINHFFCEILSVLRLACADTWLNQ) lie on the Extracellular side of the membrane. The chain crosses the membrane as a helical span at residues 196–218 (VVIFAACVFFLVGPPSLVLVSYS). The Cytoplasmic portion of the chain corresponds to 219-235 (HILAAILRIQSGEGRRK). A helical membrane pass occupies residues 236 to 258 (AFSTCSSHLCVVGLFFGSAIIMY). Residues 259-271 (MAPKSRHPEEQQK) are Extracellular-facing. A helical transmembrane segment spans residues 272 to 291 (VFFLFYSFFNPTLNPLIYSL). Residues 292-310 (RNGEVKGALRRALGKESHS) lie on the Cytoplasmic side of the membrane.

This sequence belongs to the G-protein coupled receptor 1 family.

Its subcellular location is the cell membrane. Functionally, odorant receptor. The polypeptide is Olfactory receptor 2A1/2A42 (OR2A1) (Homo sapiens (Human)).